A 257-amino-acid polypeptide reads, in one-letter code: Imidazole glycerol phosphate synthase subunit HisF (257 aa).

Active-site residues include aspartate 11 and aspartate 130.

It belongs to the HisA/HisF family. Heterodimer of HisH and HisF.

The protein resides in the cytoplasm. The enzyme catalyses 5-[(5-phospho-1-deoxy-D-ribulos-1-ylimino)methylamino]-1-(5-phospho-beta-D-ribosyl)imidazole-4-carboxamide + L-glutamine = D-erythro-1-(imidazol-4-yl)glycerol 3-phosphate + 5-amino-1-(5-phospho-beta-D-ribosyl)imidazole-4-carboxamide + L-glutamate + H(+). It functions in the pathway amino-acid biosynthesis; L-histidine biosynthesis; L-histidine from 5-phospho-alpha-D-ribose 1-diphosphate: step 5/9. In terms of biological role, IGPS catalyzes the conversion of PRFAR and glutamine to IGP, AICAR and glutamate. The HisF subunit catalyzes the cyclization activity that produces IGP and AICAR from PRFAR using the ammonia provided by the HisH subunit. This Francisella philomiragia subsp. philomiragia (strain ATCC 25017 / CCUG 19701 / FSC 153 / O#319-036) protein is Imidazole glycerol phosphate synthase subunit HisF.